A 662-amino-acid polypeptide reads, in one-letter code: DNA topoisomerase 4 subunit B (662 aa).

ATP is bound by residues tyrosine 20, asparagine 60, aspartate 87, 129–135 (GLHGVGI), and lysine 359. The region spanning 439-553 (TELFIVEGDS…EGHLYLAKPP (115 aa)) is the Toprim domain. Residues glutamate 445, aspartate 518, and aspartate 520 each coordinate Mg(2+).

The protein belongs to the type II topoisomerase family. ParE type 1 subfamily. Heterotetramer composed of ParC and ParE. The cofactor is Mg(2+). Requires Mn(2+) as cofactor. Ca(2+) serves as cofactor.

It carries out the reaction ATP-dependent breakage, passage and rejoining of double-stranded DNA.. Its function is as follows. Topoisomerase IV is essential for chromosome segregation. It relaxes supercoiled DNA. Performs the decatenation events required during the replication of a circular DNA molecule. The protein is DNA topoisomerase 4 subunit B of Rickettsia prowazekii (strain Madrid E).